A 362-amino-acid chain; its full sequence is Protein indeterminate-domain 16 (362 aa).

The disordered stretch occupies residues 1 to 22 (MELTQPIRENGDPQGHQLTDPD). C2H2-type zinc fingers lie at residues 39-61 (YVCE…RRRH) and 82-112 (YVCP…RRKH). The CCHC-type 1; atypical zinc-finger motif lies at 118–142 (WVCERCSKGYAVQSDYKAHLKTCGS). Zn(2+)-binding residues include cysteine 120, cysteine 123, histidine 136, cysteine 140, cysteine 147, cysteine 149, histidine 162, and cysteine 166. The CCHC-type 2; atypical zinc-finger motif lies at 145-168 (HSCDCGRVFSRVESFIEHQDTCTI). The interval 155-167 (RVESFIEHQDTCT) is SHR-binding. Positions 247–278 (SAQARHNEKRETSLTKERANEEARKAEETRQE) are disordered. The segment covering 251-278 (RHNEKRETSLTKERANEEARKAEETRQE) has biased composition (basic and acidic residues). Residues 252–319 (HNEKRETSLT…VREEAIKRIN (68 aa)) are a coiled coil.

As to expression, highly expressed in leaves, hypocotyls, roots, vasculature of cotyledons, floral organs and in the endodermis and vasculaturenof inflorescence stems.

Its subcellular location is the nucleus. In terms of biological role, transcription factor regulating lateral organ morphogenesis and gravitropic responses. Has a redundant role with IDD14 in directing leaf and floral organ morphogenesis. Acts cooperatively with IDD15 to control silique and branche orientation. Involved in the establishment of auxin gradients through the regulation of auxin biosynthesis and transport. This is Protein indeterminate-domain 16 from Arabidopsis thaliana (Mouse-ear cress).